Reading from the N-terminus, the 324-residue chain is Serine/threonine-protein phosphatase PP1 isozyme 8 (324 aa).

Residues Asp66, His68, Asp94, and Asn126 each contribute to the Mn(2+) site. His127 functions as the Proton donor in the catalytic mechanism. Mn(2+) is bound by residues His175 and His250.

This sequence belongs to the PPP phosphatase family. PP-1 subfamily. Mn(2+) serves as cofactor. In terms of tissue distribution, expressed in roots, rosettes and flowers.

The protein resides in the nucleus. The protein localises to the cytoplasm. It carries out the reaction O-phospho-L-seryl-[protein] + H2O = L-seryl-[protein] + phosphate. It catalyses the reaction O-phospho-L-threonyl-[protein] + H2O = L-threonyl-[protein] + phosphate. Its activity is regulated as follows. Phosphatase activity is strongly reduced by the protein phosphatase inhibitor 2 (I-2). In terms of biological role, serine/threonine-protein phosphatase that possesses phosphatase activity toward para-nitrophenyl phosphate (pNPP) in vitro. The sequence is that of Serine/threonine-protein phosphatase PP1 isozyme 8 from Arabidopsis thaliana (Mouse-ear cress).